Reading from the N-terminus, the 1498-residue chain is MKPLAIPANHGVMGQQEKHSLPADFTKLHLTDSLHPQVTHVSSSHSGCSITSDSGSSSLSDIYQATESEAGDMDLSGLPETAVDSEDDDDEEDIERASDPLMSRDIVRDCLEKDPIDRTDDDIEQLLEFMHQLPAFANMTMSVRRELCAVMVFAVVERAGTIVLNDGEELDSWSVILNGSVEVTYPDGKAEILCMGNSFGVSPTMDKEYMKGVMRTKVDDCQFVCIAQQDYCRILNQVEKNMQKVEEEGEIVMVKEHRELDRTGTRKGHIVIKGTSERLTMHLVEEHSVVDPTFIEDFLLTYRTFLSSPMEVGKKLLEWFNDPSLRDKVTRVVLLWVNNHFNDFEGDPAMTRFLEEFENNLEREKMGGHLRLLNIACAAKAKRRLMTLTKPSREAPLPFILLGGSEKGFGIFVDSVDSGSKATEAGLKRGDQILEVNGQNFENIQLSKAMEILRNNTHLSITVKTNLFVFKELLTRLSEEKRNGAPHLPKIGDIKKASRYSIPDLAVDVEQVIGLEKVNKKSKANTVGGRNKLKKILDKTRISILPQKPYNDIGIGQSQDDSIVGLRQTKHIPTALPVSGTLSSSNPDLLQSHHRILDFSTTPDLPDQVLRVFKADQQSRYIMISKDTTAKEVVIQAIREFAVTATPDQYSLCEVSVTPEGVIKQRRLPDQLSKLADRIQLSGRYYLKNNMETETLCSDEDAQELLRESQISLLQLSTVEVATQLSMRNFELFRNIEPTEYIDDLFKLKSKTSCANLKKFEEVINQETFWVASEILRETNQLKRMKIIKHFIKIALHCRECKNFNSMFAIISGLNLAPVARLRTTWEKLPNKYEKLFQDLQDLFDPSRNMAKYRNVLNSQNLQPPIIPLFPVIKKDLTFLHEGNDSKVDGLVNFEKLRMIAKEIRHVGRMASVNMDPALMFRTRKKKWRSLGSLSQGSTNATVLDVAQTGGHKKRVRRSSFLNAKKLYEDAQMARKVKQYLSNLELEMDEESLQTLSLQCEPATNTLPKNPGDKKPVKSETSPVAPRAGSQQKAQAQPPPPQPQPQHKINQGLQVPAVSLYPSRKKVPVKDLPPFGINSPQALKKILSLSEEGSLERHKKQAEDTISNASSQLSSPPTSPQSSPRKGYTLAPSGTVDNFSDSGHSEISSRSSIVSNSSFDSVPVSLHEERRQRHSVSIVETNLGVGRMERRTMMEPDQYSLGSYAPMAESRGLYATATVISSPSTEELSQDQGDRASLDAADSGRGSWTSCSSGSHDNIQTIQHQRSWETLPFGHTHFDYSGDPAGLWASSSHMDQIMFSDHSTKYNRQNQSRESLEQAQSRASWASSTGYWGEDSEGDTGTIKRRGGKDVSIEAESSSVTSVTTEETKPVPMPAHVAVTSSTAKGLIVRKEGRYREPPPTPPGYIGIPITDFPEGHSHPARKPPDYNVALQRSRMVARPTDTAAPSPIQQPHGHPASGRPVNKPQWHKPNECDPRLAPYQSQGFSTEEDEDEQVSAV.

Disordered regions lie at residues 40 to 59 and 68 to 101; these read HVSS…SSSL and SEAG…SDPL. Positions 83–94 are enriched in acidic residues; the sequence is VDSEDDDDEEDI. Position 135-252 (135-252) interacts with a nucleoside 3',5'-cyclic phosphate; that stretch reads AFANMTMSVR…QKVEEEGEIV (118 aa). The N-terminal Ras-GEF domain occupies 267-380; the sequence is KGHIVIKGTS…RLLNIACAAK (114 aa). One can recognise a PDZ domain in the interval 385–468; sequence LMTLTKPSRE…LSITVKTNLF (84 aa). The residue at position 501 (serine 501) is a Phosphoserine. The Ras-associating domain occupies 606 to 692; that stretch reads PDQVLRVFKA…GRYYLKNNME (87 aa). Threonine 644 carries the post-translational modification Phosphothreonine. One can recognise a Ras-GEF domain in the interval 717–944; the sequence is STVEVATQLS…SQGSTNATVL (228 aa). Phosphoserine occurs at positions 806, 930, 933, 1022, 1079, 1088, 1094, 1115, 1119, 1158, and 1175. Positions 1002–1048 are disordered; it reads PATNTLPKNPGDKKPVKSETSPVAPRAGSQQKAQAQPPPPQPQPQHK. The disordered stretch occupies residues 1094–1159; that stretch reads SLERHKKQAE…RSSIVSNSSF (66 aa). Low complexity-rich tracts occupy residues 1110 to 1124 and 1140 to 1159; these read SSQL…QSSP and SDSG…NSSF. 3 disordered regions span residues 1224 to 1257, 1304 to 1371, and 1392 to 1498; these read STEE…GSHD, TKYN…TKPV, and EGRY…VSAV. Polar residues-rich tracts occupy residues 1246 to 1257 and 1306 to 1330; these read GSWTSCSSGSHD and YNRQ…SSTG. Residues 1354-1365 show a composition bias toward low complexity; the sequence is EAESSSVTSVTT. Positions 1487 to 1498 are enriched in acidic residues; that stretch reads TEEDEDEQVSAV.

Belongs to the RAPGEF2 family. As to quaternary structure, found in a complex, at least composed of KIDINS220, MAGI2, NTRK1 and RAPGEF2; the complex is mainly formed at late endosomes in a neuronal growth factor (NGF)-dependent manner. Interacts (via C-terminal domain) with NEDD4 (via WW domains); this interaction leads to ubiquitination and degradation via the proteasome pathway in a cAMP-independent manner. Interacts with MAGI1 (via PDZ domain). Interacts with ADRB1 (via C-terminal PDZ motif); the interaction is direct. Interacts (via Ras-associating domain) with RAP1A (via GTP-bound active form). Interacts weakly with HRAS (via GDP- and GTP-bound forms). Interacts (via C-terminal domain) with MAGI2 (via PDZ and WW domains). Interacts with CDH1, CTNNB1 and TJP1. Ubiquitinated by NEDD4, leading to proteasomal degradation. Post-translationally, phosphorylation by PLK2 promotes its activity.

The protein resides in the cell junction. It localises to the cytoplasm. It is found in the perinuclear region. Its subcellular location is the cell membrane. The protein localises to the late endosome. In terms of biological role, functions as a guanine nucleotide exchange factor (GEF), which activates Rap and Ras family of small GTPases by exchanging bound GDP for free GTP in a cAMP-dependent manner. Serves as a link between cell surface receptors and Rap/Ras GTPases in intracellular signaling cascades. Also acts as an effector for Rap1 by direct association with Rap1-GTP thereby leading to the amplification of Rap1-mediated signaling. Shows weak activity on HRAS. It is controversial whether RAPGEF2 binds cAMP and cGMP or not. Its binding to ligand-activated beta-1 adrenergic receptor ADRB1 leads to the Ras activation through the G(s)-alpha signaling pathway. Involved in the cAMP-induced Ras and Erk1/2 signaling pathway that leads to sustained inhibition of long term melanogenesis by reducing dendrite extension and melanin synthesis. Also provides inhibitory signals for cell proliferation of melanoma cells and promotes their apoptosis in a cAMP-independent nanner. Regulates cAMP-induced neuritogenesis by mediating the Rap1/B-Raf/ERK signaling through a pathway that is independent on both PKA and RAPGEF3/RAPGEF4. Involved in neuron migration and in the formation of the major forebrain fiber connections forming the corpus callosum, the anterior commissure and the hippocampal commissure during brain development. Involved in neuronal growth factor (NGF)-induced sustained activation of Rap1 at late endosomes and in brain-derived neurotrophic factor (BDNF)-induced axon outgrowth of hippocampal neurons. Plays a role in the regulation of embryonic blood vessel formation and in the establishment of basal junction integrity and endothelial barrier function. May be involved in the regulation of the vascular endothelial growth factor receptor KDR and cadherin CDH5 expression at allantois endothelial cell-cell junctions. The sequence is that of Rap guanine nucleotide exchange factor 2 (RAPGEF2) from Canis lupus familiaris (Dog).